A 33-amino-acid polypeptide reads, in one-letter code: Non-specific lipid-transfer protein (33 aa).

Cys14 and Cys29 are joined by a disulfide.

The protein belongs to the plant LTP family. As to quaternary structure, dimer.

Plant non-specific lipid-transfer proteins transfer phospholipids as well as galactolipids across membranes. May play a role in wax or cutin deposition in the cell walls of expanding epidermal cells and certain secretory tissues. Has antibacterial activity against Gram-positive bacteria S.aureus and S.epidermidis and blocks biofilm formation. In a mouse model, also protects against bacterial sepsis and has an anti-inflammatory effect. Exhibits antinociceptive activity upon oral or intraperitoneal application in mice. In Morinda citrifolia (Indian mulberry), this protein is Non-specific lipid-transfer protein.